The sequence spans 580 residues: DNA mismatch repair protein MutL (580 aa).

The protein belongs to the DNA mismatch repair MutL/HexB family.

Its function is as follows. This protein is involved in the repair of mismatches in DNA. It is required for dam-dependent methyl-directed DNA mismatch repair. May act as a 'molecular matchmaker', a protein that promotes the formation of a stable complex between two or more DNA-binding proteins in an ATP-dependent manner without itself being part of a final effector complex. In Chlamydia caviae (strain ATCC VR-813 / DSM 19441 / 03DC25 / GPIC) (Chlamydophila caviae), this protein is DNA mismatch repair protein MutL.